The sequence spans 525 residues: Cysteine--tRNA ligase (525 aa).

Position 49 (Cys-49) interacts with Zn(2+). The short motif at 51–61 (VTVYDLCHLGH) is the 'HIGH' region element. 3 residues coordinate Zn(2+): Cys-258, His-283, and Glu-287. Residues 315–319 (KMSKS) carry the 'KMSKS' region motif. Position 318 (Lys-318) interacts with ATP.

The protein belongs to the class-I aminoacyl-tRNA synthetase family. In terms of assembly, monomer. Zn(2+) serves as cofactor.

It localises to the cytoplasm. It carries out the reaction tRNA(Cys) + L-cysteine + ATP = L-cysteinyl-tRNA(Cys) + AMP + diphosphate. The protein is Cysteine--tRNA ligase of Synechococcus sp. (strain JA-2-3B'a(2-13)) (Cyanobacteria bacterium Yellowstone B-Prime).